The chain runs to 1343 residues: DNA-directed RNA polymerase subunit beta (1343 aa).

The protein belongs to the RNA polymerase beta chain family. As to quaternary structure, the RNAP catalytic core consists of 2 alpha, 1 beta, 1 beta' and 1 omega subunit. When a sigma factor is associated with the core the holoenzyme is formed, which can initiate transcription.

The catalysed reaction is RNA(n) + a ribonucleoside 5'-triphosphate = RNA(n+1) + diphosphate. Functionally, DNA-dependent RNA polymerase catalyzes the transcription of DNA into RNA using the four ribonucleoside triphosphates as substrates. In Haemophilus influenzae (strain PittEE), this protein is DNA-directed RNA polymerase subunit beta.